The chain runs to 480 residues: UDP-N-acetylmuramoylalanine--D-glutamate ligase (480 aa).

110-116 (GTNGKST) provides a ligand contact to ATP.

This sequence belongs to the MurCDEF family.

It localises to the cytoplasm. The catalysed reaction is UDP-N-acetyl-alpha-D-muramoyl-L-alanine + D-glutamate + ATP = UDP-N-acetyl-alpha-D-muramoyl-L-alanyl-D-glutamate + ADP + phosphate + H(+). It functions in the pathway cell wall biogenesis; peptidoglycan biosynthesis. Functionally, cell wall formation. Catalyzes the addition of glutamate to the nucleotide precursor UDP-N-acetylmuramoyl-L-alanine (UMA). The protein is UDP-N-acetylmuramoylalanine--D-glutamate ligase of Synechococcus sp. (strain JA-2-3B'a(2-13)) (Cyanobacteria bacterium Yellowstone B-Prime).